The primary structure comprises 106 residues: Iron-sulfur cluster assembly protein CyaY (106 aa).

The protein belongs to the frataxin family.

Its function is as follows. Involved in iron-sulfur (Fe-S) cluster assembly. May act as a regulator of Fe-S biogenesis. The polypeptide is Iron-sulfur cluster assembly protein CyaY (Escherichia coli O7:K1 (strain IAI39 / ExPEC)).